Here is a 435-residue protein sequence, read N- to C-terminus: Legumain (435 aa).

A signal peptide spans 1–17 (MTWRVAVLLSLVLGAGA). N-linked (GlcNAc...) asparagine glycosylation is present at asparagine 93. Residue histidine 150 is part of the active site. Asparagine 169 is a glycosylation site (N-linked (GlcNAc...) asparagine). Cysteine 191 serves as the catalytic Nucleophile. N-linked (GlcNAc...) asparagine glycans are attached at residues asparagine 265 and asparagine 274. Positions 326 to 435 (DVKESQNLIG…AMDKVCLSHY (110 aa)) are excised as a propeptide. 2 disulfide bridges follow: cysteine 380–cysteine 414 and cysteine 392–cysteine 431.

It belongs to the peptidase C13 family. As to quaternary structure, homodimer before autocatalytic removal of the propeptide. Monomer after autocatalytic processing. May interact with integrins. Glycosylated. In terms of processing, activated by autocatalytic processing at pH 4. Detected in kidney proximal tubules (at protein level). Ubiquitous. Particularly abundant in kidney and placenta.

The protein localises to the lysosome. The catalysed reaction is Hydrolysis of proteins and small molecule substrates at -Asn-|-Xaa- bonds.. With respect to regulation, inhibited by cystatin-C. In terms of biological role, has a strict specificity for hydrolysis of asparaginyl bonds. Can also cleave aspartyl bonds slowly, especially under acidic conditions. Involved in the processing of proteins for MHC class II antigen presentation in the lysosomal/endosomal system. Also involved in MHC class I antigen presentation in cross-presenting dendritic cells by mediating cleavage and maturation of Perforin-2 (MPEG1), thereby promoting antigen translocation in the cytosol. Required for normal lysosomal protein degradation in renal proximal tubules. Required for normal degradation of internalized EGFR. Plays a role in the regulation of cell proliferation via its role in EGFR degradation. This chain is Legumain (Lgmn), found in Mus musculus (Mouse).